Here is a 153-residue protein sequence, read N- to C-terminus: D-erythrulose-4-phosphate isomerase 1 (153 aa).

The Proton acceptor role is filled by Cys69.

It belongs to the LacAB/RpiB family.

It carries out the reaction D-erythrulose 4-phosphate = D-erythrose 4-phosphate. The protein operates within carbohydrate metabolism; erythritol degradation. It functions in the pathway carbohydrate metabolism; D-threitol degradation. Functionally, catalyzes the isomerization of D-erythrulose-4P to D-erythrose-4P. Involved in the degradation pathways of erythritol and D-threitol, that allow M.smegmatis to grow on these compounds as the sole carbon source. The protein is D-erythrulose-4-phosphate isomerase 1 of Mycolicibacterium smegmatis (strain ATCC 700084 / mc(2)155) (Mycobacterium smegmatis).